A 331-amino-acid polypeptide reads, in one-letter code: Ferredoxin--NADP reductase (331 aa).

T20, E39, Q47, Y52, V92, F126, D287, and S328 together coordinate FAD.

This sequence belongs to the ferredoxin--NADP reductase type 2 family. In terms of assembly, homodimer. The cofactor is FAD.

It catalyses the reaction 2 reduced [2Fe-2S]-[ferredoxin] + NADP(+) + H(+) = 2 oxidized [2Fe-2S]-[ferredoxin] + NADPH. In Bacillus cereus (strain ZK / E33L), this protein is Ferredoxin--NADP reductase.